We begin with the raw amino-acid sequence, 483 residues long: Glutathione reductase (483 aa).

Position 1 is an N-acetylmethionine (Met1). Leu2 bears the N-acetylserine mark. FAD-binding residues include Ser33 and Gly34. Ser33 is a glutathione binding site. Position 40 (Arg40) interacts with glutathione. Positions 53, 60, 61, and 69 each coordinate FAD. A disulfide bridge connects residues Cys61 and Cys66. Position 123 (Tyr123) interacts with glutathione. Ala139 lines the FAD pocket. The NADP(+) site is built by Ala205, Ile208, Glu211, Arg228, and Arg234. Residue Thr243 coordinates glutathione. An N-linked (GlcNAc...) asparagine glycan is attached at Asn278. Gly294 provides a ligand contact to NADP(+). Asp334 is a binding site for FAD. Residue Glu340 participates in NADP(+) binding. Residue Thr342 coordinates FAD. Position 350 (Arg350) interacts with glutathione. Val375 provides a ligand contact to NADP(+). Residue Lys425 participates in glutathione binding. His472 is a binding site for FAD. The active-site Proton acceptor is His472.

Belongs to the class-I pyridine nucleotide-disulfide oxidoreductase family. In terms of assembly, homodimer. The cofactor is FAD.

The protein localises to the cytoplasm. The protein resides in the nucleus. Its subcellular location is the mitochondrion. It is found in the peroxisome. It carries out the reaction 2 glutathione + NADP(+) = glutathione disulfide + NADPH + H(+). Its function is as follows. Catalyzes the reduction of glutathione disulfide (GSSG) to reduced glutathione (GSH). Constitutes the major mechanism to maintain a high GSH:GSSG ratio in the cytosol. This chain is Glutathione reductase, found in Saccharomyces cerevisiae (strain ATCC 204508 / S288c) (Baker's yeast).